The primary structure comprises 66 residues: DNA gyrase inhibitor YacG (66 aa).

Residues C9, C12, C28, and C32 each coordinate Zn(2+).

Belongs to the DNA gyrase inhibitor YacG family. In terms of assembly, interacts with GyrB. Requires Zn(2+) as cofactor.

In terms of biological role, inhibits all the catalytic activities of DNA gyrase by preventing its interaction with DNA. Acts by binding directly to the C-terminal domain of GyrB, which probably disrupts DNA binding by the gyrase. The protein is DNA gyrase inhibitor YacG of Pseudomonas aeruginosa (strain LESB58).